We begin with the raw amino-acid sequence, 219 residues long: GTP-binding protein Rab-3D (219 aa).

Residue Ala-2 is modified to N-acetylalanine. Residue 29 to 37 (GNSSVGKTS) participates in GDP binding. GTP is bound by residues Ser-31, Ser-32, Val-33, Gly-34, Lys-35, Thr-36, Ser-37, Pro-49, and Ser-53. A Mg(2+)-binding site is contributed by Thr-36. The short motif at 49–58 (PAFVSTVGID) is the Switch 1 element. Thr-54 and Asp-77 together coordinate Mg(2+). Gly-80 contacts GTP. The Switch 2 motif lies at 80–96 (GQERYRTITTAYYRGAM). Thr-86 carries the phosphothreonine modification. Residues Asn-135, Lys-136, Asp-138, Ala-166, and Lys-167 each coordinate GTP. Residues 135–138 (NKCD) and 165–167 (SAK) contribute to the GDP site. A Phosphoserine modification is found at Ser-190. Positions 190 to 219 (SLEPSSSPGSNGKGPALGDTPPPQPSSCGC) are disordered. Residues 193-203 (PSSSPGSNGKG) show a composition bias toward low complexity. Over residues 209-219 (TPPPQPSSCGC) the composition is skewed to pro residues. Residues Cys-217 and Cys-219 are each lipidated (S-geranylgeranyl cysteine). At Cys-219 the chain carries Cysteine methyl ester; partial.

It belongs to the small GTPase superfamily. Rab family. As to quaternary structure, interacts with RIMS1, RIMS2, RPH3A and RPH3AL. Interacts with RAB3IP. The GTP-bound form interacts with REP15. Interacts with CHM; phosphorylation at Thr-86 disrupts this interaction. Interacts with MADD (via uDENN domain); the GTP-bound form is preferred for interaction. Mg(2+) is required as a cofactor. Post-translationally, in fetal glands the majority of the proteins are methylated, whereas in neonatal and adult glands, only 50% are methylated. In terms of processing, phosphorylation of Thr-86 in the switch II region by LRRK2 prevents the association of RAB regulatory proteins, including CHM. In terms of tissue distribution, highest levels found in lung.

The protein localises to the cell membrane. The catalysed reaction is GTP + H2O = GDP + phosphate + H(+). Regulated by guanine nucleotide exchange factors (GEFs) which promote the exchange of bound GDP for free GTP. Regulated by GTPase activating proteins (GAPs) which increase the GTP hydrolysis activity. Inhibited by GDP dissociation inhibitors (GDIs) which prevent Rab-GDP dissociation. In terms of biological role, the small GTPases Rab are key regulators of intracellular membrane trafficking, from the formation of transport vesicles to their fusion with membranes. Rabs cycle between an inactive GDP-bound form and an active GTP-bound form that is able to recruit to membranes different sets of downstream effectors directly responsible for vesicle formation, movement, tethering and fusion. RAB3D may be involved in the insulin-induced exocytosis of GLUT4-containing vesicles in adipocytes. The protein is GTP-binding protein Rab-3D of Rattus norvegicus (Rat).